Here is a 283-residue protein sequence, read N- to C-terminus: uncharacterized protein (283 aa).

This is an uncharacterized protein from Halobacterium salinarum (strain ATCC 700922 / JCM 11081 / NRC-1) (Halobacterium halobium).